The sequence spans 87 residues: Cell division protein FtsL (87 aa).

The Cytoplasmic portion of the chain corresponds to 1-3 (MSR). The chain crosses the membrane as a helical span at residues 4 to 23 (LLLIVLLACSIASAIGVVYM). The Periplasmic segment spans residues 24–87 (RHMHRKLFVQ…ETSDIVVIRP (64 aa)).

Belongs to the FtsL family. Part of a complex composed of FtsB, FtsL and FtsQ.

The protein localises to the cell inner membrane. Essential cell division protein. May link together the upstream cell division proteins, which are predominantly cytoplasmic, with the downstream cell division proteins, which are predominantly periplasmic. The protein is Cell division protein FtsL of Xanthomonas campestris pv. campestris (strain ATCC 33913 / DSM 3586 / NCPPB 528 / LMG 568 / P 25).